A 114-amino-acid chain; its full sequence is Probable 4-amino-4-deoxy-L-arabinose-phosphoundecaprenol flippase subunit ArnE (114 aa).

3 helical membrane passes run 41–61 (MWLWLAIACLGLGLLVWLLVL), 64–84 (MDVGIAYPMLGLNFVLITLVG), and 91–111 (PVDPQHWLGIALILVGVFQLG).

Belongs to the ArnE family. Heterodimer of ArnE and ArnF.

It is found in the cell inner membrane. It participates in bacterial outer membrane biogenesis; lipopolysaccharide biosynthesis. Its function is as follows. Translocates 4-amino-4-deoxy-L-arabinose-phosphoundecaprenol (alpha-L-Ara4N-phosphoundecaprenol) from the cytoplasmic to the periplasmic side of the inner membrane. This Pseudomonas savastanoi pv. phaseolicola (strain 1448A / Race 6) (Pseudomonas syringae pv. phaseolicola (strain 1448A / Race 6)) protein is Probable 4-amino-4-deoxy-L-arabinose-phosphoundecaprenol flippase subunit ArnE.